A 210-amino-acid chain; its full sequence is Thiamine-phosphate synthase (210 aa).

4-amino-2-methyl-5-(diphosphooxymethyl)pyrimidine is bound by residues 39-43 (QLREK) and N71. 2 residues coordinate Mg(2+): D72 and D91. S110 lines the 4-amino-2-methyl-5-(diphosphooxymethyl)pyrimidine pocket. Residue 136–138 (TST) coordinates 2-[(2R,5Z)-2-carboxy-4-methylthiazol-5(2H)-ylidene]ethyl phosphate. K139 provides a ligand contact to 4-amino-2-methyl-5-(diphosphooxymethyl)pyrimidine. 2-[(2R,5Z)-2-carboxy-4-methylthiazol-5(2H)-ylidene]ethyl phosphate is bound by residues G166 and 186 to 187 (VS).

The protein belongs to the thiamine-phosphate synthase family. It depends on Mg(2+) as a cofactor.

It catalyses the reaction 2-[(2R,5Z)-2-carboxy-4-methylthiazol-5(2H)-ylidene]ethyl phosphate + 4-amino-2-methyl-5-(diphosphooxymethyl)pyrimidine + 2 H(+) = thiamine phosphate + CO2 + diphosphate. It carries out the reaction 2-(2-carboxy-4-methylthiazol-5-yl)ethyl phosphate + 4-amino-2-methyl-5-(diphosphooxymethyl)pyrimidine + 2 H(+) = thiamine phosphate + CO2 + diphosphate. The catalysed reaction is 4-methyl-5-(2-phosphooxyethyl)-thiazole + 4-amino-2-methyl-5-(diphosphooxymethyl)pyrimidine + H(+) = thiamine phosphate + diphosphate. Its pathway is cofactor biosynthesis; thiamine diphosphate biosynthesis; thiamine phosphate from 4-amino-2-methyl-5-diphosphomethylpyrimidine and 4-methyl-5-(2-phosphoethyl)-thiazole: step 1/1. Its function is as follows. Condenses 4-methyl-5-(beta-hydroxyethyl)thiazole monophosphate (THZ-P) and 2-methyl-4-amino-5-hydroxymethyl pyrimidine pyrophosphate (HMP-PP) to form thiamine monophosphate (TMP). This Ruminiclostridium cellulolyticum (strain ATCC 35319 / DSM 5812 / JCM 6584 / H10) (Clostridium cellulolyticum) protein is Thiamine-phosphate synthase.